An 853-amino-acid polypeptide reads, in one-letter code: MIKVTIDEQSLEVEAGSTVLAAAERLGIEIPTFCYWKRLPPLASCRMCLVEIEGLRRLQPACATVAADGMVVRTNTPLIEETRSSMLDMLLANHPLDCPICDKGGECELQDMVMAYGPGESRFRDPKRVFHSKDIRLSPVIIMNVNRCIQCQRCVRMCEEVVGAVALGTVEKGMDTAVTGFEGSLASCDQCGNCVEVCPVGALMSFPYRYKARPWDLAETDTICPHCGTGCQLTVGARKGEFMRVRSDWEHGVNRETLCVRGRFGLDFIESRDRIKRPMIRRDGTLTPVSWEEAGDFLRQRLGVAEGKAAGGLISPRLPNEVLYQFQKLMRTVLRTNNVDCSSRWSAPLDILVPIVASFYSRDPLEQVIGKDCVLIIGGNVTEENPVTEYLLRDAARRRHTRLLMLSARPSRLDADARAVLRAHPGGEGQSLAAVVAALVAVTDEGLPDDIFAKTSGTTASSGANDALDRLVSTLKEGRSVTLLVSVDLLRSPLARKTLEQLGNLLQLLRLLGKEPSLQFLFDRANQMGAWDMGVLPGVLPGLSPIADEATRTRFERSWGAEIPREPGADVDAMLELCEKGGMGVLYVVGSDPLISYPDREFVERALGAANLLIVQDAFLTDTAGLADVVLPAAGYGEESGTFTNNEGRTQALRKFREPAFDARSNLAIFGFIAALRERPLQPSTETVIFEEMTRLVPAYEGLTWEGLGADGAFTTSAPKPWTSGFFAPLSAPAVTDVLQLITGNCLFHNGYVSEHSETLNSVADDPFIEMSAQDAAGLSLSDGDQVLVRSARGELTAKLKVNRRFPHGLVFVPENYRALRLNSLMRRGEYPCPVEIRECAKRAASALDEERV.

A 2Fe-2S ferredoxin-type domain is found at 1–78; sequence MIKVTIDEQS…GMVVRTNTPL (78 aa). Residues Cys34, Cys45, Cys48, and Cys62 each contribute to the [2Fe-2S] cluster site. Residues 78–117 form the 4Fe-4S His(Cys)3-ligated-type domain; the sequence is LIEETRSSMLDMLLANHPLDCPICDKGGECELQDMVMAYG. [4Fe-4S] cluster-binding residues include His94, Cys98, Cys101, Cys107, Cys148, Cys151, Cys154, Cys198, Cys224, Cys227, Cys231, and Cys259. 2 4Fe-4S ferredoxin-type domains span residues 139–170 and 179–209; these read PVII…LGTV and TGFE…FPYR. Positions 217-273 constitute a 4Fe-4S Mo/W bis-MGD-type domain; it reads LAETDTICPHCGTGCQLTVGARKGEFMRVRSDWEHGVNRETLCVRGRFGLDFIESRD.

The protein belongs to the complex I 75 kDa subunit family. [2Fe-2S] cluster is required as a cofactor. It depends on [4Fe-4S] cluster as a cofactor.

The catalysed reaction is a quinone + NADH + 5 H(+)(in) = a quinol + NAD(+) + 4 H(+)(out). Functionally, NDH-1 shuttles electrons from NADH, via FMN and iron-sulfur (Fe-S) centers, to quinones in the respiratory chain. The immediate electron acceptor for the enzyme in this species is believed to be ubiquinone. Couples the redox reaction to proton translocation (for every two electrons transferred, four hydrogen ions are translocated across the cytoplasmic membrane), and thus conserves the redox energy in a proton gradient. In Rhizobium meliloti (strain 1021) (Ensifer meliloti), this protein is NADH-quinone oxidoreductase subunit G 2 (nuoG2).